The sequence spans 543 residues: Oligopeptide-binding protein AppA (543 aa).

An N-terminal signal peptide occupies residues 1-23 (MKRRKTALMMLSVLMVLAIFLSA). C24 is lipidated: N-palmitoyl cysteine. A lipid anchor (S-diacylglycerol cysteine) is attached at C24.

This sequence belongs to the bacterial solute-binding protein 5 family.

The protein resides in the cell membrane. This protein is a component of an oligopeptide permease, a binding protein-dependent transport system. This APP system can completely substitute for the OPP system in both sporulation and genetic competence. AppA can bind and transport tetra- and pentapeptides but not tripeptides. The polypeptide is Oligopeptide-binding protein AppA (appA) (Bacillus subtilis (strain 168)).